A 122-amino-acid polypeptide reads, in one-letter code: Small ribosomal subunit protein uS13 (122 aa).

The disordered stretch occupies residues 94 to 122; sequence KQLPVRGQRTHTNARTRKGKAKPIAGKKK.

It belongs to the universal ribosomal protein uS13 family. Part of the 30S ribosomal subunit. Forms a loose heterodimer with protein S19. Forms two bridges to the 50S subunit in the 70S ribosome.

Located at the top of the head of the 30S subunit, it contacts several helices of the 16S rRNA. In the 70S ribosome it contacts the 23S rRNA (bridge B1a) and protein L5 of the 50S subunit (bridge B1b), connecting the 2 subunits; these bridges are implicated in subunit movement. Contacts the tRNAs in the A and P-sites. The sequence is that of Small ribosomal subunit protein uS13 from Methylorubrum extorquens (strain PA1) (Methylobacterium extorquens).